The sequence spans 305 residues: Probable lipid kinase YegS-like (305 aa).

The DAGKc domain occupies 1 to 129 (MSERKALLIL…IDLGEVGGQI (129 aa)). ATP contacts are provided by residues T39, 65 to 71 (GDGTLRD), and T92. L210, D213, and L215 together coordinate Mg(2+). The active-site Proton acceptor is E268.

The protein belongs to the diacylglycerol/lipid kinase family. YegS lipid kinase subfamily. Requires Mg(2+) as cofactor. The cofactor is Ca(2+).

The protein localises to the cytoplasm. Functionally, probably phosphorylates lipids; the in vivo substrate is unknown. In Pseudomonas fluorescens (strain Pf0-1), this protein is Probable lipid kinase YegS-like.